Reading from the N-terminus, the 361-residue chain is Phosphoserine aminotransferase (361 aa).

R43 serves as a coordination point for L-glutamate. Pyridoxal 5'-phosphate-binding positions include A77–S78, W103, T152, D172, and Q195. An N6-(pyridoxal phosphate)lysine modification is found at K196. Pyridoxal 5'-phosphate is bound at residue N237–T238.

Belongs to the class-V pyridoxal-phosphate-dependent aminotransferase family. SerC subfamily. As to quaternary structure, homodimer. The cofactor is pyridoxal 5'-phosphate.

It is found in the cytoplasm. The catalysed reaction is O-phospho-L-serine + 2-oxoglutarate = 3-phosphooxypyruvate + L-glutamate. It carries out the reaction 4-(phosphooxy)-L-threonine + 2-oxoglutarate = (R)-3-hydroxy-2-oxo-4-phosphooxybutanoate + L-glutamate. The protein operates within amino-acid biosynthesis; L-serine biosynthesis; L-serine from 3-phospho-D-glycerate: step 2/3. It functions in the pathway cofactor biosynthesis; pyridoxine 5'-phosphate biosynthesis; pyridoxine 5'-phosphate from D-erythrose 4-phosphate: step 3/5. Its function is as follows. Catalyzes the reversible conversion of 3-phosphohydroxypyruvate to phosphoserine and of 3-hydroxy-2-oxo-4-phosphonooxybutanoate to phosphohydroxythreonine. This is Phosphoserine aminotransferase from Desulfosudis oleivorans (strain DSM 6200 / JCM 39069 / Hxd3) (Desulfococcus oleovorans).